The sequence spans 398 residues: Unsaturated chondroitin disaccharide hydrolase (398 aa).

D115 serves as the catalytic Nucleophile. Substrate contacts are provided by D115, D175, G233, T235, R247, W251, S365, and S368. D175 serves as the catalytic Proton donor.

The protein belongs to the glycosyl hydrolase 88 family. In terms of assembly, monomer.

It catalyses the reaction beta-D-4-deoxy-Delta(4)-GlcpA-(1-&gt;3)-beta-D-GalpNAc6S + H2O = N-acetyl-beta-D-galactosamine 6-sulfate + 5-dehydro-4-deoxy-D-glucuronate. In terms of biological role, catalyzes the hydrolysis of unsaturated hyaluronate and chondroitin disaccharides. Also degrades unsaturated heparin disaccharides. Releases 4-deoxy-4,5-didehydro D-glucuronic acid or 4-deoxy-4,5-didehydro L-iduronic acid from chondroitin disaccharides, hyaluronan disaccharides and heparin disaccharides and cleaves both glycosidic (1-&gt;3) and (1-&gt;4) bonds. Prefers sulfated glycosaminoglycans compared to unsulfated glycosaminoglycans. Probably required for mammalian cells invasion through the degradation of extracellular sulfated glycosaminoglycans such as chondroitin and hyaluronan. This is Unsaturated chondroitin disaccharide hydrolase from Streptococcus agalactiae serotype III (strain NEM316).